The following is a 168-amino-acid chain: Shikimate kinase (168 aa).

10-15 is a binding site for ATP; the sequence is GVGKTT. Thr-14 provides a ligand contact to Mg(2+). 3 residues coordinate substrate: Asp-32, Arg-56, and Gly-77. Arg-115 contributes to the ATP binding site. Arg-133 provides a ligand contact to substrate.

This sequence belongs to the shikimate kinase family. In terms of assembly, monomer. Mg(2+) serves as cofactor.

It is found in the cytoplasm. The catalysed reaction is shikimate + ATP = 3-phosphoshikimate + ADP + H(+). It participates in metabolic intermediate biosynthesis; chorismate biosynthesis; chorismate from D-erythrose 4-phosphate and phosphoenolpyruvate: step 5/7. Catalyzes the specific phosphorylation of the 3-hydroxyl group of shikimic acid using ATP as a cosubstrate. This chain is Shikimate kinase, found in Macrococcus caseolyticus (strain JCSC5402) (Macrococcoides caseolyticum).